The sequence spans 83 residues: Cytochrome c oxidase subunit 7A2, mitochondrial (83 aa).

The transit peptide at 1 to 23 (MLRNLLALRQIGQRTISTASRRH) directs the protein to the mitochondrion. Topologically, residues 24–48 (FKNKVPEKQKLFQEDDEIPLYLKGG) are mitochondrial matrix. The residue at position 33 (lysine 33) is an N6-acetyllysine. The helical transmembrane segment at 49–77 (VADALLYRATMILTVGGTAYAIYELAVAS) threads the bilayer. Topologically, residues 78–83 (FPKKQE) are mitochondrial intermembrane.

Belongs to the cytochrome c oxidase VIIa family. As to quaternary structure, component of the cytochrome c oxidase (complex IV, CIV), a multisubunit enzyme composed of 14 subunits. The complex is composed of a catalytic core of 3 subunits MT-CO1, MT-CO2 and MT-CO3, encoded in the mitochondrial DNA, and 11 supernumerary subunits COX4I1 (or COX4I2), COX5A, COX5B, COX6A1 (or COX6A2), COX6B1 (or COX6B2), COX6C, COX7A2 (or COX7A1), COX7B, COX7C, COX8A and NDUFA4, which are encoded in the nuclear genome. The complex exists as a monomer or a dimer and forms supercomplexes (SCs) in the inner mitochondrial membrane with NADH-ubiquinone oxidoreductase (complex I, CI) and ubiquinol-cytochrome c oxidoreductase (cytochrome b-c1 complex, complex III, CIII), resulting in different assemblies (supercomplex SCI(1)III(2)IV(1) and megacomplex MCI(2)III(2)IV(2)). Interacts with PET100.

The protein localises to the mitochondrion inner membrane. It participates in energy metabolism; oxidative phosphorylation. In terms of biological role, component of the cytochrome c oxidase, the last enzyme in the mitochondrial electron transport chain which drives oxidative phosphorylation. The respiratory chain contains 3 multisubunit complexes succinate dehydrogenase (complex II, CII), ubiquinol-cytochrome c oxidoreductase (cytochrome b-c1 complex, complex III, CIII) and cytochrome c oxidase (complex IV, CIV), that cooperate to transfer electrons derived from NADH and succinate to molecular oxygen, creating an electrochemical gradient over the inner membrane that drives transmembrane transport and the ATP synthase. Cytochrome c oxidase is the component of the respiratory chain that catalyzes the reduction of oxygen to water. Electrons originating from reduced cytochrome c in the intermembrane space (IMS) are transferred via the dinuclear copper A center (CU(A)) of subunit 2 and heme A of subunit 1 to the active site in subunit 1, a binuclear center (BNC) formed by heme A3 and copper B (CU(B)). The BNC reduces molecular oxygen to 2 water molecules using 4 electrons from cytochrome c in the IMS and 4 protons from the mitochondrial matrix. The sequence is that of Cytochrome c oxidase subunit 7A2, mitochondrial (COX7A2) from Homo sapiens (Human).